The chain runs to 162 residues: Peptide methionine sulfoxide reductase MsrA (162 aa).

C10 is a catalytic residue.

The protein belongs to the MsrA Met sulfoxide reductase family.

The catalysed reaction is L-methionyl-[protein] + [thioredoxin]-disulfide + H2O = L-methionyl-(S)-S-oxide-[protein] + [thioredoxin]-dithiol. It carries out the reaction [thioredoxin]-disulfide + L-methionine + H2O = L-methionine (S)-S-oxide + [thioredoxin]-dithiol. In terms of biological role, has an important function as a repair enzyme for proteins that have been inactivated by oxidation. Catalyzes the reversible oxidation-reduction of methionine sulfoxide in proteins to methionine. This Clostridium acetobutylicum (strain ATCC 824 / DSM 792 / JCM 1419 / IAM 19013 / LMG 5710 / NBRC 13948 / NRRL B-527 / VKM B-1787 / 2291 / W) protein is Peptide methionine sulfoxide reductase MsrA.